The following is a 128-amino-acid chain: Large ribosomal subunit protein bL17 (128 aa).

This sequence belongs to the bacterial ribosomal protein bL17 family. Part of the 50S ribosomal subunit. Contacts protein L32.

This is Large ribosomal subunit protein bL17 from Erwinia tasmaniensis (strain DSM 17950 / CFBP 7177 / CIP 109463 / NCPPB 4357 / Et1/99).